Reading from the N-terminus, the 567-residue chain is Protein ESMERALDA 1 (567 aa).

Positions 1-41 (MLAKNRLPGSGHTTPSPPASPRRSPRYRHGRSKAAAGSRFP) are disordered. At 1–65 (MLAKNRLPGS…ILLSVLLRRQ (65 aa)) the chain is on the cytoplasmic side. The segment covering 23–32 (RSPRYRHGRS) has biased composition (basic residues). Residues 66-86 (GIFLFAPLIYISCMLLYMGTV) form a helical; Signal-anchor for type II membrane protein membrane-spanning segment. At 87 to 567 (SFDVVPIIQR…TPESRPPPAT (481 aa)) the chain is on the lumenal side. 4 N-linked (GlcNAc...) asparagine glycosylation sites follow: Asn-121, Asn-145, Asn-184, and Asn-238. A substrate-binding site is contributed by 331 to 333 (HLR). 5 N-linked (GlcNAc...) asparagine glycosylation sites follow: Asn-403, Asn-419, Asn-449, Asn-538, and Asn-554.

It belongs to the glycosyltransferase GT106 family. As to expression, ubiquitous.

It is found in the golgi apparatus membrane. Its pathway is protein modification; protein glycosylation. Its function is as follows. Glycosyltransferase that plays a role in cell adhesion. This chain is Protein ESMERALDA 1, found in Arabidopsis thaliana (Mouse-ear cress).